A 244-amino-acid chain; its full sequence is Small ribosomal subunit protein uS3 (244 aa).

The KH type-2 domain occupies 39–107 (MRKFVMSELK…ETHLNIVEVR (69 aa)). The disordered stretch occupies residues 214 to 244 (ASERRALEGDAQGPASRERDRGDRRRERDNA). A compositionally biased stretch (basic and acidic residues) spans 229–244 (SRERDRGDRRRERDNA).

The protein belongs to the universal ribosomal protein uS3 family. Part of the 30S ribosomal subunit. Forms a tight complex with proteins S10 and S14.

In terms of biological role, binds the lower part of the 30S subunit head. Binds mRNA in the 70S ribosome, positioning it for translation. The protein is Small ribosomal subunit protein uS3 of Rhizobium etli (strain CIAT 652).